The sequence spans 214 residues: Large ribosomal subunit protein uL16-like (214 aa).

Belongs to the universal ribosomal protein uL16 family. As to quaternary structure, component of the 60S large ribosomal subunit (LSU).

The protein localises to the cytoplasm. Functionally, testis-specific component of the ribosome, which is required for the transition from prophase to metaphase in male meiosis I. Compensates for the inactivated X-linked RPL10 paralog during spermatogenesis. The ribosome is a large ribonucleoprotein complex responsible for the synthesis of proteins in the cell. The small ribosomal subunit (SSU) binds messenger RNAs (mRNAs) and translates the encoded message by selecting cognate aminoacyl-transfer RNA (tRNA) molecules. The large subunit (LSU) contains the ribosomal catalytic site termed the peptidyl transferase center (PTC), which catalyzes the formation of peptide bonds, thereby polymerizing the amino acids delivered by tRNAs into a polypeptide chain. The nascent polypeptides leave the ribosome through a tunnel in the LSU and interact with protein factors that function in enzymatic processing, targeting, and the membrane insertion of nascent chains at the exit of the ribosomal tunnel. The chain is Large ribosomal subunit protein uL16-like (RPL10L) from Macaca fascicularis (Crab-eating macaque).